The chain runs to 178 residues: Crossover junction endodeoxyribonuclease RuvC (178 aa).

Residues aspartate 14, glutamate 73, and aspartate 145 contribute to the active site. Residues aspartate 14, glutamate 73, and aspartate 145 each coordinate Mg(2+).

It belongs to the RuvC family. As to quaternary structure, homodimer which binds Holliday junction (HJ) DNA. The HJ becomes 2-fold symmetrical on binding to RuvC with unstacked arms; it has a different conformation from HJ DNA in complex with RuvA. In the full resolvosome a probable DNA-RuvA(4)-RuvB(12)-RuvC(2) complex forms which resolves the HJ. Mg(2+) serves as cofactor.

Its subcellular location is the cytoplasm. It catalyses the reaction Endonucleolytic cleavage at a junction such as a reciprocal single-stranded crossover between two homologous DNA duplexes (Holliday junction).. Functionally, the RuvA-RuvB-RuvC complex processes Holliday junction (HJ) DNA during genetic recombination and DNA repair. Endonuclease that resolves HJ intermediates. Cleaves cruciform DNA by making single-stranded nicks across the HJ at symmetrical positions within the homologous arms, yielding a 5'-phosphate and a 3'-hydroxyl group; requires a central core of homology in the junction. The consensus cleavage sequence is 5'-(A/T)TT(C/G)-3'. Cleavage occurs on the 3'-side of the TT dinucleotide at the point of strand exchange. HJ branch migration catalyzed by RuvA-RuvB allows RuvC to scan DNA until it finds its consensus sequence, where it cleaves and resolves the cruciform DNA. The chain is Crossover junction endodeoxyribonuclease RuvC from Nitrosomonas eutropha (strain DSM 101675 / C91 / Nm57).